Reading from the N-terminus, the 197-residue chain is Ribonuclease HII (197 aa).

The region spanning 10 to 197 is the RNase H type-2 domain; it reads ELIAGVDEVG…APVRKLLNTL (188 aa). Positions 16, 17, and 108 each coordinate a divalent metal cation.

This sequence belongs to the RNase HII family. The cofactor is Mn(2+). Mg(2+) is required as a cofactor.

Its subcellular location is the cytoplasm. It catalyses the reaction Endonucleolytic cleavage to 5'-phosphomonoester.. Functionally, endonuclease that specifically degrades the RNA of RNA-DNA hybrids. The chain is Ribonuclease HII (rnhB) from Pasteurella multocida (strain Pm70).